Reading from the N-terminus, the 351-residue chain is MITVVTIPRSVSWKGDAIAVLNQTKLPHSTEYKTLTTIEEVWKSIVMLEVRGAPAIGIVAAFGLALASKKYTTLHIEEFQKKFNRDCNYLGTSRPTAVNLFWAIDRMRESIQEITTIKEAQKILEEEALRIQQEDEAVCRSIGEHALTCFKDGDNILTICNAGSIATARYGTALAPFYIGKEKGVHLHAYACETRPVLQGGRLTTWELKQAGIDVTLITDNTAAHAIQTKEINAIIVGADRIVANGDTANKIGTMNLAILAKYFDIPFYVAAPLSTFDITKQTGAEIVIEERDETEVTKIFGKQVAPVGTTVYNPAFDVTPNELITGIITEQGIIRGDYKREIASLFEKTS.

Substrate contacts are provided by residues R51 to A53, R94, and Q199. D240 (proton donor) is an active-site residue. Position 250–251 (N250–K251) interacts with substrate.

It belongs to the EIF-2B alpha/beta/delta subunits family. MtnA subfamily. In terms of assembly, homodimer.

The catalysed reaction is 5-(methylsulfanyl)-alpha-D-ribose 1-phosphate = 5-(methylsulfanyl)-D-ribulose 1-phosphate. The protein operates within amino-acid biosynthesis; L-methionine biosynthesis via salvage pathway; L-methionine from S-methyl-5-thio-alpha-D-ribose 1-phosphate: step 1/6. Catalyzes the interconversion of methylthioribose-1-phosphate (MTR-1-P) into methylthioribulose-1-phosphate (MTRu-1-P). This chain is Methylthioribose-1-phosphate isomerase, found in Bacillus cereus (strain ZK / E33L).